A 648-amino-acid polypeptide reads, in one-letter code: Probable potassium transport system protein Kup 1 (648 aa).

A disordered region spans residues 1 to 31 (MSDAVTDADGSSAQSHAQSAGHHAVQGHGGH). Residues 10–26 (GSSAQSHAQSAGHHAVQ) show a composition bias toward low complexity. 12 consecutive transmembrane segments (helical) span residues 39 to 59 (LAVG…LYAL), 73 to 93 (LLHI…IVTF), 130 to 150 (IILL…ITPA), 165 to 185 (PDMH…LFFI), 193 to 213 (VAAF…VLGA), 243 to 263 (FLAM…YADM), 275 to 295 (WLVF…SLLI), 317 to 337 (LLFI…SGAF), 364 to 384 (IFIP…VLVF), 394 to 414 (YGIA…VVLF), 421 to 441 (APAA…YLGA), and 446 to 466 (IPDG…LLTT).

It belongs to the HAK/KUP transporter (TC 2.A.72) family.

The protein localises to the cell inner membrane. The catalysed reaction is K(+)(in) + H(+)(in) = K(+)(out) + H(+)(out). Functionally, transport of potassium into the cell. Likely operates as a K(+):H(+) symporter. The chain is Probable potassium transport system protein Kup 1 from Novosphingobium aromaticivorans (strain ATCC 700278 / DSM 12444 / CCUG 56034 / CIP 105152 / NBRC 16084 / F199).